Reading from the N-terminus, the 299-residue chain is Homoserine O-acetyltransferase (299 aa).

Cys142 acts as the Acyl-thioester intermediate in catalysis. Substrate-binding residues include Lys163 and Ser192. The active-site Proton acceptor is the His235. Glu237 is a catalytic residue. Residue Arg249 coordinates substrate.

The protein belongs to the MetA family.

It localises to the cytoplasm. It catalyses the reaction L-homoserine + acetyl-CoA = O-acetyl-L-homoserine + CoA. The protein operates within amino-acid biosynthesis; L-methionine biosynthesis via de novo pathway; O-acetyl-L-homoserine from L-homoserine: step 1/1. Functionally, transfers an acetyl group from acetyl-CoA to L-homoserine, forming acetyl-L-homoserine. In Synechococcus elongatus (strain ATCC 33912 / PCC 7942 / FACHB-805) (Anacystis nidulans R2), this protein is Homoserine O-acetyltransferase.